Here is a 90-residue protein sequence, read N- to C-terminus: Small ribosomal subunit protein uS15 (90 aa).

This sequence belongs to the universal ribosomal protein uS15 family. In terms of assembly, part of the 30S ribosomal subunit. Forms a bridge to the 50S subunit in the 70S ribosome, contacting the 23S rRNA.

In terms of biological role, one of the primary rRNA binding proteins, it binds directly to 16S rRNA where it helps nucleate assembly of the platform of the 30S subunit by binding and bridging several RNA helices of the 16S rRNA. Forms an intersubunit bridge (bridge B4) with the 23S rRNA of the 50S subunit in the ribosome. The chain is Small ribosomal subunit protein uS15 from Aquifex aeolicus (strain VF5).